Here is a 175-residue protein sequence, read N- to C-terminus: Pycsar effector protein RsPycTM (175 aa).

3 helical membrane passes run 17–37 (AKNAALLTFCSVWMGAIITLL), 44–64 (PLGFDYAFKASLTVLFIAAII), and 146–166 (AGSLVLFAFGIMMVPPILFCI).

Its subcellular location is the cell inner membrane. Functionally, pycsar (pyrimidine cyclase system for antiphage resistance) provides immunity against bacteriophage. The pyrimidine cyclase (PycC) synthesizes cyclic nucleotides in response to infection; these serve as specific second messenger signals. The signals activate the nearby effector, leading to bacterial cell death and abortive phage infection. A clade A Pycsar system. In terms of biological role, the effector gene of a two-gene Pycsar system. Expression of this and uridylate cyclase RsPycC (AC A0A4R2TZQ0) probably confers resistance to bacteriophage. The genes are probably only expressed in response to bacteriophage infection. Probably only responds to cUMP (produced by its cognate NTP cyclase), acts by impairing membrane integrity. In Rhizobium sp. (strain PP-F2F-G36), this protein is Pycsar effector protein RsPycTM.